Reading from the N-terminus, the 209-residue chain is Thymidylate kinase (209 aa).

Residue 13–20 (GLEGAGKS) coordinates ATP.

Belongs to the thymidylate kinase family.

The enzyme catalyses dTMP + ATP = dTDP + ADP. In terms of biological role, phosphorylation of dTMP to form dTDP in both de novo and salvage pathways of dTTP synthesis. This Shewanella sp. (strain ANA-3) protein is Thymidylate kinase.